Reading from the N-terminus, the 430-residue chain is DNA-binding protein cre-1 (430 aa).

The span at 1–19 shows a compositional bias: polar residues; that stretch reads MQRVQSAVDFSNLLNPSES. Disordered stretches follow at residues 1 to 77, 97 to 187, 265 to 340, and 357 to 430; these read MQRV…LPRP, IRTH…PHSY, SRSH…RNLS, and LDGQ…MDRL. Residues 30–46 show a composition bias toward low complexity; sequence PRQQTAQPQQQQQQPQP. 2 C2H2-type zinc fingers span residues 78–100 and 106–130; these read YKCP…IRTH and HACQ…SRIH. The span at 97-106 shows a compositional bias: basic and acidic residues; that stretch reads IRTHTGEKPH. Composition is skewed to polar residues over residues 130–147 and 175–187; these read HSNP…QQQH and AMSS…PHSY. Positions 268-277 are enriched in basic and acidic residues; that stretch reads HSHEDHDDHY. A compositionally biased stretch (low complexity) spans 289–303; that stretch reads PNSPNSTAPSSPTFS. Polar residues predominate over residues 412–422; sequence SVRNSSSTSLS.

It belongs to the creA/MIG C2H2-type zinc-finger protein family.

Its subcellular location is the nucleus. Its function is as follows. Involved in carbon catabolite repression. Represses the transcription of a number of genes by binding to a GC-rich region in their promoter. The polypeptide is DNA-binding protein cre-1 (cre-1) (Neurospora crassa (strain ATCC 24698 / 74-OR23-1A / CBS 708.71 / DSM 1257 / FGSC 987)).